Here is a 494-residue protein sequence, read N- to C-terminus: Transcriptional regulator calD (494 aa).

The protein localises to the nucleus. In terms of biological role, transcription co-regulator that might be involved in the regulation of the expression of the gene cluster that mediates the biosynthesis of calbistrins and related compounds such as decumbenones. Calbistrin A is a secondary metabolite with an interesting structure that was recently found to have bioactivity against leukemia cells. It consists of two polyketides linked by an ester bond: a bicyclic decalin containing polyketide and a linear 12 carbon dioic acid structure. The sequence is that of Transcriptional regulator calD from Penicillium decumbens.